The primary structure comprises 1091 residues: Sodium/potassium exporting P-type ATPase 1 (1091 aa).

Residues 1-63 are Cytoplasmic-facing; that stretch reads MGEGTTKENN…LGDDTKIDYK (63 aa). The helical transmembrane segment at 64-84 threads the bilayer; the sequence is AMVLHQVCNAMIMVLLISMII. Residues 85–90 are Extracellular-facing; it reads SFAMHD. Residues 91-111 form a helical membrane-spanning segment; the sequence is WITGGVISFVIAVNVLIGLVQ. Residues 112 to 282 are Cytoplasmic-facing; it reads EYKATKTMNS…TNVGTPLHRK (171 aa). A helical membrane pass occupies residues 283 to 303; sequence LSKLAVLLFWIAVLFAIIVMA. Residues 304–312 lie on the Extracellular side of the membrane; that stretch reads SQKFDVDKR. Residues 313-333 form a helical membrane-spanning segment; it reads VAIYAICVALSMIPSSLVVVL. The Cytoplasmic segment spans residues 334 to 815; sequence TITMSVGAAV…RRMTDNIQKF (482 aa). The active-site 4-aspartylphosphate intermediate is D369. Positions 369 and 371 each coordinate Mg(2+). Residues T371 and E483 each contribute to the ATP site. The segment at 499–525 is disordered; the sequence is ALTGEKSTNQSNENDQSSLSQHNEKPG. Over residues 503-519 the composition is skewed to polar residues; sequence EKSTNQSNENDQSSLSQ. Positions 561, 606, 673, 674, 675, 732, and 738 each coordinate ATP. A Mg(2+)-binding site is contributed by D757. N760 lines the ATP pocket. The chain crosses the membrane as a helical span at residues 816-836; it reads VLQLLAENVAQALYLIIGLVF. The Extracellular portion of the chain corresponds to 837-848; the sequence is RDENGKSVFPLS. The chain crosses the membrane as a helical span at residues 849–869; it reads PVEVLWIIVVTSCFPAMGLGL. The Cytoplasmic segment spans residues 870 to 885; that stretch reads EKAAPDLMDRPPHDSE. A helical membrane pass occupies residues 886–906; sequence VGIFTWEVIIDTFAYGIIMTG. Residues 907–943 lie on the Extracellular side of the membrane; the sequence is SCMASFTGSLYGINSGRLGHDCDGTYNSSCRDVYRSR. A helical transmembrane segment spans residues 944–964; that stretch reads SAAFATMTWCALILAWEVVDM. At 965 to 991 the chain is on the cytoplasmic side; the sequence is RRSFFRMHPDTDSPVKEFFRSIWGNQF. The chain crosses the membrane as a helical span at residues 992-1012; sequence LFWSIIFGFVSAFPVVYIPVI. Over 1013–1021 the chain is Extracellular; it reads NDKVFLHKP. A helical transmembrane segment spans residues 1022-1042; that stretch reads IGAEWGLAIAFTIAFWIGAEL. The Cytoplasmic segment spans residues 1043-1091; it reads YKCGKRRYFKTQRAHNPENDLESNNKRDPFEAYSTSTTIHTEVNIGIKQ.

It belongs to the cation transport ATPase (P-type) (TC 3.A.3) family. Type IID subfamily. Mg(2+) serves as cofactor. The active site is phosphorylated in presence of sodium or potassium and in conditions of higher pH. Not phosphorylated in presence of calcium ions.

The protein resides in the cell membrane. The enzyme catalyses Na(+)(in) + ATP + H2O = Na(+)(out) + ADP + phosphate + H(+). It carries out the reaction K(+)(in) + ATP + H2O = K(+)(out) + ADP + phosphate + H(+). Its function is as follows. Catalyzes the hydrolysis of ATP coupled with the export of sodium and potassium from the cell. May export potassium less efficiently. May transport other cations such as lithium. Sodium/potassium efflux ATPases are involved in salt tolerance and maintaining the membrane potential across the plasma membrane in high salinity (Na+) or alkaline (K+) environments. Is negatively modulated by SIS2/HAL3. The polypeptide is Sodium/potassium exporting P-type ATPase 1 (Saccharomyces cerevisiae (strain ATCC 204508 / S288c) (Baker's yeast)).